Here is a 222-residue protein sequence, read N- to C-terminus: MCPVWLLVAVVVVGGSRGAVSQCWEHPSCQELNSDSSMMECIQLCHSDLTAEKPVIPGNAHLQPPPLPDPSSSSSFILPSSSSSSSSPQSKRSYSMEHFRWGKPVGRKRRPVKVYTSNGVEEESAEVFPGEMRRRELASELLAAAEEEEEKAQEVMAEEEEEQKQLLQEKKDGSYKMKHFRWSGPPASKRYGGFMKSWDERSQRPLLTLFKNVINKDGQQQK.

The N-terminal stretch at 1–18 (MCPVWLLVAVVVVGGSRG) is a signal peptide. A propeptide spanning residues 19-90 (AVSQCWEHPS…SSSSSSSPQS (72 aa)) is cleaved from the precursor. Disordered regions lie at residues 56–98 (IPGN…SMEH) and 148–170 (EEEKAQEVMAEEEEEQKQLLQEK). The span at 70–93 (PSSSSSFILPSSSSSSSSPQSKRS) shows a compositional bias: low complexity. The segment covering 148–162 (EEEKAQEVMAEEEEE) has biased composition (acidic residues).

Belongs to the POMC family. Post-translationally, specific enzymatic cleavages at paired basic residues yield the different active peptides.

Its subcellular location is the secreted. Functionally, stimulates the adrenal glands to release cortisol. Its function is as follows. Anorexigenic peptide. Increases the pigmentation of skin by increasing melanin production in melanocytes. In terms of biological role, increases the pigmentation of skin by increasing melanin production in melanocytes. Endogenous orexigenic opiate. Functionally, endogenous opiate. The sequence is that of Pro-opiomelanocortin (pomc) from Thunnus obesus (Bigeye tuna).